We begin with the raw amino-acid sequence, 408 residues long: Phosphoglycerate kinase (408 aa).

Substrate contacts are provided by residues 22–24 (DIN), R39, 60–63 (HQSR), R117, and R157. ATP is bound by residues E332 and 358–361 (GGHT).

This sequence belongs to the phosphoglycerate kinase family. As to quaternary structure, monomer.

The protein resides in the cytoplasm. It catalyses the reaction (2R)-3-phosphoglycerate + ATP = (2R)-3-phospho-glyceroyl phosphate + ADP. Its pathway is carbohydrate degradation; glycolysis; pyruvate from D-glyceraldehyde 3-phosphate: step 2/5. This Thermoplasma acidophilum (strain ATCC 25905 / DSM 1728 / JCM 9062 / NBRC 15155 / AMRC-C165) protein is Phosphoglycerate kinase (pgk).